The following is a 586-amino-acid chain: uncharacterized protein (586 aa).

Coiled coils occupy residues 183–293 and 331–400; these read THTE…ELEN and FKDK…DKKN.

This is an uncharacterized protein from Bacillus subtilis (strain 168).